Consider the following 966-residue polypeptide: DNA mismatch repair protein MutS (966 aa).

Residue 709–716 coordinates ATP; it reads GPNMAGKS. The segment at 894–914 is disordered; the sequence is EGQRPPSSPAQPPAPPAPVVV. Residues 899-912 show a composition bias toward pro residues; that stretch reads PSSPAQPPAPPAPV.

The protein belongs to the DNA mismatch repair MutS family.

In terms of biological role, this protein is involved in the repair of mismatches in DNA. It is possible that it carries out the mismatch recognition step. This protein has a weak ATPase activity. This Chloroflexus aurantiacus (strain ATCC 29366 / DSM 635 / J-10-fl) protein is DNA mismatch repair protein MutS.